Consider the following 475-residue polypeptide: Ribulose bisphosphate carboxylase large chain (475 aa).

The propeptide occupies 1–2 (MS). Pro3 bears the N-acetylproline mark. At Lys14 the chain carries N6,N6,N6-trimethyllysine. 2 residues coordinate substrate: Asn123 and Thr173. The Proton acceptor role is filled by Lys175. Position 177 (Lys177) interacts with substrate. The Mg(2+) site is built by Lys201, Asp203, and Glu204. Lys201 is modified (N6-carboxylysine). The Proton acceptor role is filled by His294. The substrate site is built by Arg295, His327, and Ser379.

The protein belongs to the RuBisCO large chain family. Type I subfamily. In terms of assembly, heterohexadecamer of 8 large chains and 8 small chains. Mg(2+) serves as cofactor.

Its subcellular location is the plastid. It localises to the chloroplast. It carries out the reaction 2 (2R)-3-phosphoglycerate + 2 H(+) = D-ribulose 1,5-bisphosphate + CO2 + H2O. It catalyses the reaction D-ribulose 1,5-bisphosphate + O2 = 2-phosphoglycolate + (2R)-3-phosphoglycerate + 2 H(+). Functionally, ruBisCO catalyzes two reactions: the carboxylation of D-ribulose 1,5-bisphosphate, the primary event in carbon dioxide fixation, as well as the oxidative fragmentation of the pentose substrate in the photorespiration process. Both reactions occur simultaneously and in competition at the same active site. This is Ribulose bisphosphate carboxylase large chain from Nymphaea alba (White water-lily).